Here is a 194-residue protein sequence, read N- to C-terminus: 7-methyl-GTP pyrophosphatase (194 aa).

D69 acts as the Proton acceptor in catalysis.

The protein belongs to the Maf family. YceF subfamily. Requires a divalent metal cation as cofactor.

The protein localises to the cytoplasm. The enzyme catalyses N(7)-methyl-GTP + H2O = N(7)-methyl-GMP + diphosphate + H(+). Its function is as follows. Nucleoside triphosphate pyrophosphatase that hydrolyzes 7-methyl-GTP (m(7)GTP). May have a dual role in cell division arrest and in preventing the incorporation of modified nucleotides into cellular nucleic acids. In Shigella boydii serotype 4 (strain Sb227), this protein is 7-methyl-GTP pyrophosphatase (yceF1).